A 482-amino-acid polypeptide reads, in one-letter code: ATP synthase subunit beta (482 aa).

Residue 162–169 coordinates ATP; the sequence is GGAGVGKT.

It belongs to the ATPase alpha/beta chains family. In terms of assembly, F-type ATPases have 2 components, CF(1) - the catalytic core - and CF(0) - the membrane proton channel. CF(1) has five subunits: alpha(3), beta(3), gamma(1), delta(1), epsilon(1). CF(0) has four main subunits: a(1), b(1), b'(1) and c(9-12).

It is found in the cellular thylakoid membrane. The catalysed reaction is ATP + H2O + 4 H(+)(in) = ADP + phosphate + 5 H(+)(out). In terms of biological role, produces ATP from ADP in the presence of a proton gradient across the membrane. The catalytic sites are hosted primarily by the beta subunits. The sequence is that of ATP synthase subunit beta from Nostoc punctiforme (strain ATCC 29133 / PCC 73102).